The sequence spans 205 residues: Dephospho-CoA kinase (205 aa).

Residues 15–205 (VIGLTGGIAT…VERALDQASI (191 aa)) enclose the DPCK domain. An ATP-binding site is contributed by 23 to 28 (ATGKST).

The protein belongs to the CoaE family.

It is found in the cytoplasm. It catalyses the reaction 3'-dephospho-CoA + ATP = ADP + CoA + H(+). The protein operates within cofactor biosynthesis; coenzyme A biosynthesis; CoA from (R)-pantothenate: step 5/5. Functionally, catalyzes the phosphorylation of the 3'-hydroxyl group of dephosphocoenzyme A to form coenzyme A. In Gloeobacter violaceus (strain ATCC 29082 / PCC 7421), this protein is Dephospho-CoA kinase.